A 450-amino-acid polypeptide reads, in one-letter code: Cysteine protease ATG4C (450 aa).

The Nucleophile role is filled by C112. Active-site residues include D336 and H338.

The protein belongs to the peptidase C54 family.

It is found in the cytoplasm. The catalysed reaction is [protein]-C-terminal L-amino acid-glycyl-phosphatidylethanolamide + H2O = [protein]-C-terminal L-amino acid-glycine + a 1,2-diacyl-sn-glycero-3-phosphoethanolamine. Functionally, cysteine protease that plays a key role in autophagy by mediating both proteolytic activation and delipidation of ATG8 family proteins. The protease activity is required for proteolytic activation of ATG8 family proteins: cleaves the C-terminal amino acid of ATG8 proteins to reveal a C-terminal glycine. Exposure of the glycine at the C-terminus is essential for ATG8 proteins conjugation to phosphatidylethanolamine (PE) and insertion to membranes, which is necessary for autophagy. In addition to the protease activity, also mediates delipidation of ATG8 family proteins. Catalyzes delipidation of PE-conjugated forms of ATG8 proteins during macroautophagy. This chain is Cysteine protease ATG4C, found in Xenopus tropicalis (Western clawed frog).